Here is a 188-residue protein sequence, read N- to C-terminus: MSKLEAILSQEVEAEIQALLQEAEAKAEAVKREAEEKAKALLQARERALEAQYRAALRRAESAGELLVATARTQARGEVLEEVRRRVREALEALPKKPEWPEVVRKLALEALEALPGAKALVANPEDLPHLEALAKERGVELKAEPALRLGVRAVGAEGKTQVENSLLARLDRAWDALSSKVAQALWG.

It belongs to the V-ATPase E subunit family.

Functionally, produces ATP from ADP in the presence of a proton gradient across the membrane. This Thermus thermophilus (strain ATCC BAA-163 / DSM 7039 / HB27) protein is V-type ATP synthase subunit E.